Here is a 154-residue protein sequence, read N- to C-terminus: 17.4 kDa class I heat shock protein (154 aa).

One can recognise a sHSP domain in the interval 40-154 (DAAAFAGARI…PDVKSIQITG (115 aa)).

Belongs to the small heat shock protein (HSP20) family. May form oligomeric structures.

It localises to the cytoplasm. This Oryza sativa subsp. japonica (Rice) protein is 17.4 kDa class I heat shock protein (HSP17.4).